A 354-amino-acid polypeptide reads, in one-letter code: UPF0496 protein At4g34330 (354 aa).

Transmembrane regions (helical) follow at residues 200–220 (IIFM…ATMA) and 222–242 (PHVA…GKWI). Positions 270-341 (AVQDLNNIKD…CSTDIRRART (72 aa)) form a coiled coil.

This sequence belongs to the UPF0496 family.

It localises to the membrane. The protein is UPF0496 protein At4g34330 of Arabidopsis thaliana (Mouse-ear cress).